The primary structure comprises 323 residues: DNA-directed RNA polymerase subunit alpha (323 aa).

The tract at residues 1–225 is alpha N-terminal domain (alpha-NTD); the sequence is MLDIAMPKIE…QYSQTIADFN (225 aa). Positions 246-323 are alpha C-terminal domain (alpha-CTD); that stretch reads IYDTPIEELD…SHAARAEIEG (78 aa).

Belongs to the RNA polymerase alpha chain family. As to quaternary structure, homodimer. The RNAP catalytic core consists of 2 alpha, 1 beta, 1 beta' and 1 omega subunit. When a sigma factor is associated with the core the holoenzyme is formed, which can initiate transcription.

The enzyme catalyses RNA(n) + a ribonucleoside 5'-triphosphate = RNA(n+1) + diphosphate. Functionally, DNA-dependent RNA polymerase catalyzes the transcription of DNA into RNA using the four ribonucleoside triphosphates as substrates. The protein is DNA-directed RNA polymerase subunit alpha of Roseiflexus sp. (strain RS-1).